The primary structure comprises 327 residues: E3 ubiquitin-protein ligase SINAT4 (327 aa).

The segment at 1–27 is disordered; it reads METDSMECVSSTGNEIHQNGNGHQSYQ. Polar residues predominate over residues 8-27; that stretch reads CVSSTGNEIHQNGNGHQSYQ. The RING-type zinc-finger motif lies at 64 to 100; the sequence is CPVCTYSMYPPIHQCHNGHTLCSTCKVRVHNRCPTCR. Positions 114–307 are SBD; it reads VAESLELPCK…KELKLRVTGK (194 aa). An SIAH-type zinc finger spans residues 117-177; that stretch reads SLELPCKFYN…LVAHLRDDHK (61 aa). Positions 122, 129, 141, 145, 152, 159, 171, and 176 each coordinate Zn(2+).

The protein belongs to the SINA (Seven in absentia) family. Interacts with SINAT6. Interacts with WAV3. Interacts with FREE1. Interacts with ELC/VPS23A.

Its subcellular location is the endosome. The protein resides in the multivesicular body. The protein localises to the cytoplasmic vesicle. It localises to the autophagosome. It carries out the reaction S-ubiquitinyl-[E2 ubiquitin-conjugating enzyme]-L-cysteine + [acceptor protein]-L-lysine = [E2 ubiquitin-conjugating enzyme]-L-cysteine + N(6)-ubiquitinyl-[acceptor protein]-L-lysine.. The protein operates within protein modification; protein ubiquitination. Functionally, E3 ubiquitin-protein ligase that mediates ubiquitination and subsequent proteasomal degradation of target proteins. E3 ubiquitin ligases accept ubiquitin from an E2 ubiquitin-conjugating enzyme in the form of a thioester and then directly transfers the ubiquitin to targeted substrates. It probably triggers the ubiquitin-mediated degradation of different substrates. Modulates directly the ubiquitination and proteasomal-dependent degradation of FREE1, a component of the ESCRT-I complex. Modulates directly the ubiquitination and proteasomal-dependent degradation of ELC/VPS23A, a component of the ESCRT-I complex. The sequence is that of E3 ubiquitin-protein ligase SINAT4 from Arabidopsis thaliana (Mouse-ear cress).